The sequence spans 354 residues: Polyprenal reductase 1 (354 aa).

6 helical membrane-spanning segments follow: residues 11–31 (PLLC…ALPI), 78–98 (FMHF…AIWF), 141–158 (YHVW…IQVL), 176–196 (MHIV…LSLA), 235–255 (PLLK…WGSL), and 301–321 (GMLV…VFVI).

This sequence belongs to the steroid 5-alpha reductase family. Polyprenal reductase subfamily.

Its subcellular location is the cell membrane. The enzyme catalyses a di-trans,poly-cis-dolichal + NADP(+) = a di-trans,poly-cis-polyprenal + NADPH + H(+). Its pathway is protein modification; protein glycosylation. Plays a key role in early steps of protein N-linked glycosylation by being involved in the conversion of polyprenol into dolichol. Acts as a polyprenal reductase that mediates the reduction of polyprenal into dolichal in a NADP-dependent mechanism. Dolichols are required for the synthesis of dolichol-linked monosaccharides and the oligosaccharide precursor used for N-glycosylation. This is Polyprenal reductase 1 from Oryza sativa subsp. indica (Rice).